We begin with the raw amino-acid sequence, 55 residues long: Large ribosomal subunit protein bL33 (55 aa).

The protein belongs to the bacterial ribosomal protein bL33 family.

This is Large ribosomal subunit protein bL33 from Bordetella avium (strain 197N).